Reading from the N-terminus, the 120-residue chain is uncharacterized protein (120 aa).

Residues 80 to 99 (PTRKLQTPLNEPPRTWRKTA) form a disordered region.

This is an uncharacterized protein from Goose circovirus (GoCV).